Here is a 406-residue protein sequence, read N- to C-terminus: Enoyl-[acyl-carrier-protein] reductase [NADH] (406 aa).

Residues 48–53, 74–75, 111–112, and 140–141 contribute to the NAD(+) site; these read GASTGF, FE, DA, and IA. Tyr226 contacts substrate. Catalysis depends on Tyr236, which acts as the Proton donor. NAD(+) contacts are provided by residues Lys245 and 275 to 277; that span reads LVT.

This sequence belongs to the TER reductase family. Monomer.

The catalysed reaction is a 2,3-saturated acyl-[ACP] + NAD(+) = a (2E)-enoyl-[ACP] + NADH + H(+). It functions in the pathway lipid metabolism; fatty acid biosynthesis. Involved in the final reduction of the elongation cycle of fatty acid synthesis (FAS II). Catalyzes the reduction of a carbon-carbon double bond in an enoyl moiety that is covalently linked to an acyl carrier protein (ACP). The polypeptide is Enoyl-[acyl-carrier-protein] reductase [NADH] (Coxiella burnetii (strain Dugway 5J108-111)).